We begin with the raw amino-acid sequence, 453 residues long: MDATRRDLPPGSVVRRRTDRIADVLRAETTGGALLLAGAVIALIWANSPGAAGYDAMRSFTVGPAWLHLDLSLAAWAKDGLLAVFFFVAGLELKREFVTGELRQPRRAAVPIAAAVGGVLAPAAVYVLITAAAEADALRGWAIPAATDIAFALAVLAVIGRHLPPAVRVFLLTLAVVDDLIAIMIIAVFYTANLSVTPLLATALPLVAFAILLRRRVTSVWLLLPLALTTWALVHASGVHATVAGVLLALVVPARPHSQHEHTAAPSLLERFEHAIKPVSAGLAVPVFALMSAGVAIGGLGGLVSALTDPVAIGVIAGLVIGKPLGVIAVTWLVTRLTRTGLGNNLTWTHITGLSMLAGIGFTVSLLIGELSFAAGTERHDHVKIAIVTGSLIAAVLAAVILRLPNRAGSRGNDATTRDPDQTRVGTATQRTTPDHPTPAATDANQPARSPAP.

11 helical membrane-spanning segments follow: residues 32-52, 71-91, 109-129, 140-160, 169-189, 193-213, 232-252, 284-304, 310-330, 356-376, and 382-402; these read GALL…PGAA, LSLA…VAGL, AVPI…YVLI, GWAI…AVIG, VFLL…IAVF, NLSV…AILL, ALVH…ALVV, AVPV…GGLV, PVAI…VIAV, MLAG…FAAG, and HVKI…AVIL. Residues 409–453 form a disordered region; it reads GSRGNDATTRDPDQTRVGTATQRTTPDHPTPAATDANQPARSPAP.

This sequence belongs to the NhaA Na(+)/H(+) (TC 2.A.33) antiporter family.

Its subcellular location is the cell membrane. The enzyme catalyses Na(+)(in) + 2 H(+)(out) = Na(+)(out) + 2 H(+)(in). Its function is as follows. Na(+)/H(+) antiporter that extrudes sodium in exchange for external protons. This is Na(+)/H(+) antiporter NhaA 2 from Salinispora tropica (strain ATCC BAA-916 / DSM 44818 / JCM 13857 / NBRC 105044 / CNB-440).